A 70-amino-acid polypeptide reads, in one-letter code: Large ribosomal subunit protein eL38 (70 aa).

The protein belongs to the eukaryotic ribosomal protein eL38 family.

This is Large ribosomal subunit protein eL38 (RpL38) from Anopheles gambiae (African malaria mosquito).